Reading from the N-terminus, the 383-residue chain is tRNA-specific 2-thiouridylase MnmA (383 aa).

Residues 30–37 and Met-56 contribute to the ATP site; that span reads GMSGGVDS. Positions 116–118 are interaction with target base in tRNA; it reads NPD. Residue Cys-121 is the Nucleophile of the active site. A disulfide bond links Cys-121 and Cys-218. Gly-146 contacts ATP. Residues 168 to 170 are interaction with tRNA; sequence KDQ. Catalysis depends on Cys-218, which acts as the Cysteine persulfide intermediate. Residues 330–331 are interaction with tRNA; it reads RY.

It belongs to the MnmA/TRMU family.

The protein localises to the cytoplasm. The catalysed reaction is S-sulfanyl-L-cysteinyl-[protein] + uridine(34) in tRNA + AH2 + ATP = 2-thiouridine(34) in tRNA + L-cysteinyl-[protein] + A + AMP + diphosphate + H(+). Catalyzes the 2-thiolation of uridine at the wobble position (U34) of tRNA, leading to the formation of s(2)U34. The protein is tRNA-specific 2-thiouridylase MnmA of Haemophilus influenzae (strain ATCC 51907 / DSM 11121 / KW20 / Rd).